A 1057-amino-acid chain; its full sequence is Adenylate-forming reductase stbB (1057 aa).

Positions 21–378 (STKRQPGAVC…FRLRTDMNFE (358 aa)) are adenylation (A) domain. AMP-binding positions include His-251, 344–345 (NF), Thr-349, and 423–426 (AVGR). The 88-residue stretch at 564-651 (ETLEEDIKAL…QMAAAIKNPS (88 aa)) folds into the Carrier domain. O-(pantetheine 4'-phosphoryl)serine is present on Ser-600. The tract at residues 693–1025 (IVVVTGSSGS…SGAVILGTDV (333 aa)) is reductase (R) domain. NADP(+) is bound by residues 700-703 (SGSL), 783-785 (AAW), Tyr-858, and Lys-862.

This sequence belongs to the adenylate-forming reductase family.

The catalysed reaction is ilicicolinate B + AH2 + ATP = ilicicolin B + A + AMP + diphosphate. The protein operates within secondary metabolite biosynthesis; terpenoid biosynthesis. In terms of biological role, nonribosomal peptide synthase-like protein; part of the cluster that mediates the biosynthesis of LL-Z1272-beta, also known as ilicicolin B, a prenylated aryl-aldehyde produced by several fungi and that serves as a key pathway intermediate for many fungal meroterpenoids. The first step in the pathway is performed by the non-reducing polyketide synthase stbA that produces orsellinic acid by condensing acetyl-CoA with 3 malonyl-CoA units. The prenyltransferase stbC then prenylates orsenilic acid into grifolic acid. Finally, grifolic acid is reduced to ilicicolin B by the NRPS-like protein stbB. The protein is Adenylate-forming reductase stbB of Stachybotrys bisbyi (Hyalostachybotrys bisbyi).